Consider the following 900-residue polypeptide: MADTTVDKLAKEVGKSADRLVEQFSQAGIKKSANDTVSESEKQQLLDFLKKQHGGDAAPQKMTLQRKSVSTLSVAGSGGQSKDVKVEVRKKRTFVKRDEAAEAELAAAAKAEEEAKAAAAKAEAEAKAKADAEAKQKADAEAKAKAEKAAKAKSEKQEAAPAQTADEKAAKDEADKLQAAKDEVAKAKADAEAAAATEEARRLAEENAKRWADEEKARKEAEKTGDHHVTTSTEARAAEDTADANAEKRGRRPRKPSANAGNNANSNSNAGSGRPGGKGKRGKDNRRDNRNSRNSRNARSVAPESMDQAFNKSAVVVKAEVSIGETVSVSELASKMSVKATEIIKQMMKMGSMVTINQVLDQETAQLVAEEMGHKVILTRENELEHQVLADRNGDVKVEPRAPVVTIMGHVDHGKTSLLDYIRRAKVASGEAGGITQHIGAYHVETGNGMITFLDTPGHAAFTAMRARGAKATDIVILVVAADDGVMPQTIEAIQHAKAGGVPLIVAVNKIDKPEADPERVKSELSQHGVMSEDWGGENMFVHVSAKSGEGIDELLEGILLESEVLELKAVREGMAAGVVVESKLDKGRGPVATVLVQEGTLKQGDIVLCGLEYGKVRAMKDENGKAITEAGPSIPVEILGLSGVPSAGDEATVVRDERKAREVALYRQGKFRDVKLARQQKSKLENMFANMVEGEVQELNLVLKADVQGSLEAIADSLNKLSTDEVKVNIIARGVGGLTETDATLAAASNAIMVGFNVRADAQARKVVDSESVDLRYYSIIYQLIDEVRDAMGGMLAPEFRQEIIGLAEVRDVFKSPKIGAIAGCMVTEGTIKRSAPIRVLRENVVIYEGELESLRRFKDDVSDVRNGMECGIGVKNYNDVRVGDQIEVFETVEIARTL.

3 stretches are compositionally biased toward basic and acidic residues: residues 119–158, 165–191, and 198–229; these read AAKA…EKQE, ADEK…KADA, and EEAR…DHHV. A disordered region spans residues 119 to 306; that stretch reads AAKAEAEAKA…NARSVAPESM (188 aa). The span at 257 to 272 shows a compositional bias: low complexity; that stretch reads SANAGNNANSNSNAGS. The region spanning 400–569 is the tr-type G domain; sequence PRAPVVTIMG…LLESEVLELK (170 aa). A G1 region spans residues 409–416; that stretch reads GHVDHGKT. A GTP-binding site is contributed by 409–416; sequence GHVDHGKT. The segment at 434–438 is G2; the sequence is GITQH. The segment at 455 to 458 is G3; it reads DTPG. Residues 455-459 and 509-512 contribute to the GTP site; these read DTPGH and NKID. The G4 stretch occupies residues 509 to 512; it reads NKID. The segment at 545-547 is G5; it reads SAK.

Belongs to the TRAFAC class translation factor GTPase superfamily. Classic translation factor GTPase family. IF-2 subfamily.

The protein resides in the cytoplasm. One of the essential components for the initiation of protein synthesis. Protects formylmethionyl-tRNA from spontaneous hydrolysis and promotes its binding to the 30S ribosomal subunits. Also involved in the hydrolysis of GTP during the formation of the 70S ribosomal complex. In Shewanella piezotolerans (strain WP3 / JCM 13877), this protein is Translation initiation factor IF-2.